The primary structure comprises 624 residues: Kelch-like protein diablo (624 aa).

The span at 1–21 (MGDPLLPGSTGLGSGPAAAAT) shows a compositional bias: low complexity. Residues 1-55 (MGDPLLPGSTGLGSGPAAAATGGSGTTGTGLGSGGTSGAERPPSPARLTHTSEKH) form a disordered region. The span at 22 to 37 (GGSGTTGTGLGSGGTS) shows a compositional bias: gly residues. The BTB domain occupies 73 to 140 (CDVVLNVGGR…CYTAHIIVEE (68 aa)). Residues 175 to 277 (CLGIRAFADT…SPKFLVGTVG (103 aa)) enclose the BACK domain. Kelch repeat units lie at residues 324 to 370 (VLFA…VLND), 372 to 418 (LYAV…VLDG), 419 to 465 (FLYA…VLSG), 467 to 512 (LYAI…VFNN), 514 to 559 (IYAV…VVNG), and 560 to 606 (QLYA…VMRA).

Its pathway is protein modification; protein ubiquitination. Functionally, probable substrate-specific adapter of an E3 ubiquitin-protein ligase complex which mediates the ubiquitination and subsequent proteasomal degradation of target proteins. May have a role in synapse differentiation and growth. This is Kelch-like protein diablo from Drosophila virilis (Fruit fly).